The primary structure comprises 247 residues: 3-deoxy-manno-octulosonate cytidylyltransferase (247 aa).

It belongs to the KdsB family.

The protein localises to the cytoplasm. It catalyses the reaction 3-deoxy-alpha-D-manno-oct-2-ulosonate + CTP = CMP-3-deoxy-beta-D-manno-octulosonate + diphosphate. The protein operates within nucleotide-sugar biosynthesis; CMP-3-deoxy-D-manno-octulosonate biosynthesis; CMP-3-deoxy-D-manno-octulosonate from 3-deoxy-D-manno-octulosonate and CTP: step 1/1. It participates in bacterial outer membrane biogenesis; lipopolysaccharide biosynthesis. In terms of biological role, activates KDO (a required 8-carbon sugar) for incorporation into bacterial lipopolysaccharide in Gram-negative bacteria. This chain is 3-deoxy-manno-octulosonate cytidylyltransferase, found in Leptospira interrogans serogroup Icterohaemorrhagiae serovar Lai (strain 56601).